A 273-amino-acid polypeptide reads, in one-letter code: Transposon Tn7 transposition protein TnsA (273 aa).

Residues Glu-63 and Glu-73 contribute to the active site. Residues 90-108 (TRQIAIDSGIKHPVIRGVD) constitute a DNA-binding region (H-T-H motif). Asp-114 is an active-site residue. Mg(2+) is bound by residues Asp-114, Gln-130, and Val-131. Residue Lys-132 is part of the active site.

As to quaternary structure, heteromer with TnsB. Interacts with TnsC (via C-terminus); this interaction allows TnsA to bind donor DNA. Requires Mg(2+) as cofactor. It depends on Mn(2+) as a cofactor.

Functionally, required for Tn7 transposition. Forms the transposase, together with TnsB. TnsA executes the 5'-DNA strand breakage reaction. TnsABC and TnsD promote high-frequency insertion of Tn7 into a specific target site known as att-Tn7 whereas TnsABC and TnsE promote low-frequency insertion into many different sites. This Escherichia coli protein is Transposon Tn7 transposition protein TnsA.